The following is a 43-amino-acid chain: Protein PsbN (43 aa).

The chain crosses the membrane as a helical span at residues Leu-7–Phe-27.

It belongs to the PsbN family.

The protein localises to the plastid. Its subcellular location is the chloroplast thylakoid membrane. In terms of biological role, may play a role in photosystem I and II biogenesis. The sequence is that of Protein PsbN from Rhodomonas salina (Cryptomonas salina).